The sequence spans 425 residues: Polyribonucleotide 5'-hydroxyl-kinase Clp1 (425 aa).

Residues glutamate 22, lysine 62, and 124-129 each bind ATP; that span reads DVGKST.

The protein belongs to the Clp1 family. Clp1 subfamily. In terms of assembly, component of the tRNA splicing endonuclease complex. Component of pre-mRNA cleavage complex II (CF-II).

Its subcellular location is the nucleus. The catalysed reaction is a 5'-end dephospho-2'-deoxyribonucleoside-DNA + ATP = a 5'-end 5'-phospho-2'-deoxyribonucleoside-DNA + ADP + H(+). The enzyme catalyses a 5'-end dephospho-ribonucleoside-RNA + ATP = a 5'-end 5'-phospho-ribonucleoside-RNA + ADP + H(+). Polynucleotide kinase that can phosphorylate the 5'-hydroxyl groups of double-stranded RNA (dsRNA), single-stranded RNA (ssRNA), double stranded DNA (dsDNA) and double-stranded DNA:RNA hybrids. dsRNA is phosphorylated more efficiently than dsDNA, and the RNA component of a DNA:RNA hybrid is phosphorylated more efficiently than the DNA component. Plays a role in both tRNA splicing and mRNA 3'-end formation. Component of the tRNA splicing endonuclease complex: phosphorylates the 5'-terminus of the tRNA 3'-exon during tRNA splicing; this phosphorylation event is a prerequisite for the subsequent ligation of the two exon halves and the production of a mature tRNA. Its role in tRNA splicing and maturation is required for cerebellar development. Component of the pre-mRNA cleavage complex II (CF-II), which seems to be required for mRNA 3'-end formation. Also phosphorylates the 5'-terminus of exogenously introduced short interfering RNAs (siRNAs), which is a necessary prerequisite for their incorporation into the RNA-induced silencing complex (RISC). However, endogenous siRNAs and microRNAs (miRNAs) that are produced by the cleavage of dsRNA precursors by dicer1 already contain a 5'-phosphate group, so this protein may be dispensible for normal RNA-mediated gene silencing. This is Polyribonucleotide 5'-hydroxyl-kinase Clp1 from Gallus gallus (Chicken).